The primary structure comprises 545 residues: Glutamine-dependent NAD(+) synthetase (545 aa).

The region spanning 5–247 (LRIAMAQFDF…DQWLVVDYMR (243 aa)) is the CN hydrolase domain. E46 functions as the Proton acceptor; for glutaminase activity in the catalytic mechanism. K113 functions as the For glutaminase activity in the catalytic mechanism. Y119 serves as a coordination point for L-glutamine. Catalysis depends on C151, which acts as the Nucleophile; for glutaminase activity. 2 residues coordinate L-glutamine: S177 and K183. The interval 269–545 (VWRAVVRGVQ…RYPISNAYRG (277 aa)) is ligase. Residue 292-299 (GLSGGIDS) coordinates ATP. N375 is a deamido-NAD(+) binding site. An ATP-binding site is contributed by T399. Positions 404 and 516 each coordinate deamido-NAD(+).

In the C-terminal section; belongs to the NAD synthetase family.

It carries out the reaction deamido-NAD(+) + L-glutamine + ATP + H2O = L-glutamate + AMP + diphosphate + NAD(+) + H(+). It functions in the pathway cofactor biosynthesis; NAD(+) biosynthesis; NAD(+) from deamido-NAD(+) (L-Gln route): step 1/1. Its function is as follows. Catalyzes the ATP-dependent amidation of deamido-NAD to form NAD. Uses L-glutamine as a nitrogen source. This Xylella fastidiosa (strain Temecula1 / ATCC 700964) protein is Glutamine-dependent NAD(+) synthetase.